A 223-amino-acid chain; its full sequence is Kynurenine formamidase (223 aa).

A substrate-binding site is contributed by Phe34. 3 residues coordinate Zn(2+): His64, His68, and Asp70. His74 functions as the Proton donor/acceptor in the catalytic mechanism. Zn(2+)-binding residues include His174 and Glu186.

It belongs to the Cyclase 1 superfamily. KynB family. As to quaternary structure, homodimer. Requires Zn(2+) as cofactor.

The catalysed reaction is N-formyl-L-kynurenine + H2O = L-kynurenine + formate + H(+). It participates in amino-acid degradation; L-tryptophan degradation via kynurenine pathway; L-kynurenine from L-tryptophan: step 2/2. Functionally, catalyzes the hydrolysis of N-formyl-L-kynurenine to L-kynurenine, the second step in the kynurenine pathway of tryptophan degradation. The chain is Kynurenine formamidase from Polaromonas naphthalenivorans (strain CJ2).